The sequence spans 181 residues: MSEQNSNPLQDAAPEEIEAAMAANAADELQRLQTELAELKAKSAELADQFLRAKAEAENVRRRAEDEVSKARKFGIESFAESLLPVCDSLDAALAIQQATPEQLREGADATLRQLTSALERNKVVTINPAAGEKFDPNLHQAISMVPAQQEANTVVSVLQKGYLIADRILRPALVTVAQPQ.

Belongs to the GrpE family. Homodimer.

The protein localises to the cytoplasm. Functionally, participates actively in the response to hyperosmotic and heat shock by preventing the aggregation of stress-denatured proteins, in association with DnaK and GrpE. It is the nucleotide exchange factor for DnaK and may function as a thermosensor. Unfolded proteins bind initially to DnaJ; upon interaction with the DnaJ-bound protein, DnaK hydrolyzes its bound ATP, resulting in the formation of a stable complex. GrpE releases ADP from DnaK; ATP binding to DnaK triggers the release of the substrate protein, thus completing the reaction cycle. Several rounds of ATP-dependent interactions between DnaJ, DnaK and GrpE are required for fully efficient folding. In Delftia acidovorans (strain DSM 14801 / SPH-1), this protein is Protein GrpE.